Here is a 186-residue protein sequence, read N- to C-terminus: Phosphoheptose isomerase (186 aa).

In terms of domain architecture, SIS spans 33-186 (LCECLKKGGK…TLCQIIDEGF (154 aa)). A substrate-binding site is contributed by 48-50 (NGG). Zn(2+) contacts are provided by histidine 57 and glutamate 61. Substrate-binding positions include glutamate 61, 90 to 91 (ND), 116 to 118 (STS), serine 121, and glutamine 168. 2 residues coordinate Zn(2+): glutamine 168 and histidine 176.

This sequence belongs to the SIS family. GmhA subfamily. In terms of assembly, homotetramer. Requires Zn(2+) as cofactor.

It localises to the cytoplasm. The enzyme catalyses 2 D-sedoheptulose 7-phosphate = D-glycero-alpha-D-manno-heptose 7-phosphate + D-glycero-beta-D-manno-heptose 7-phosphate. The protein operates within carbohydrate biosynthesis; D-glycero-D-manno-heptose 7-phosphate biosynthesis; D-glycero-alpha-D-manno-heptose 7-phosphate and D-glycero-beta-D-manno-heptose 7-phosphate from sedoheptulose 7-phosphate: step 1/1. Its function is as follows. Catalyzes the isomerization of sedoheptulose 7-phosphate in D-glycero-D-manno-heptose 7-phosphate. The chain is Phosphoheptose isomerase from Campylobacter jejuni subsp. jejuni serotype O:6 (strain 81116 / NCTC 11828).